Reading from the N-terminus, the 178-residue chain is Ribosome maturation factor RimM (178 aa).

In terms of domain architecture, PRC barrel spans 103–177 (SKDEYYFFEI…KIVVKVPEWL (75 aa)).

Belongs to the RimM family. In terms of assembly, binds ribosomal protein uS19.

It localises to the cytoplasm. In terms of biological role, an accessory protein needed during the final step in the assembly of 30S ribosomal subunit, possibly for assembly of the head region. Essential for efficient processing of 16S rRNA. May be needed both before and after RbfA during the maturation of 16S rRNA. It has affinity for free ribosomal 30S subunits but not for 70S ribosomes. This chain is Ribosome maturation factor RimM, found in Thermosipho africanus (strain TCF52B).